The sequence spans 341 residues: Pyrophosphate--fructose 6-phosphate 1-phosphotransferase (341 aa).

Gly-10 lines the diphosphate pocket. Position 103 (Glu-103) interacts with Mg(2+). Substrate contacts are provided by residues 125 to 127 (TID), Arg-162, 169 to 171 (MGR), Glu-221, Arg-265, and 271 to 274 (HVQR). The active-site Proton acceptor is the Asp-127.

The protein belongs to the phosphofructokinase type A (PFKA) family. Mixed-substrate PFK group III subfamily. Homodimer or homotetramer. Mg(2+) is required as a cofactor.

It is found in the cytoplasm. It catalyses the reaction beta-D-fructose 6-phosphate + diphosphate = beta-D-fructose 1,6-bisphosphate + phosphate + H(+). It participates in carbohydrate degradation; glycolysis; D-glyceraldehyde 3-phosphate and glycerone phosphate from D-glucose: step 3/4. Its activity is regulated as follows. Non-allosteric. Catalyzes the phosphorylation of D-fructose 6-phosphate, the first committing step of glycolysis. Uses inorganic phosphate (PPi) as phosphoryl donor instead of ATP like common ATP-dependent phosphofructokinases (ATP-PFKs), which renders the reaction reversible, and can thus function both in glycolysis and gluconeogenesis. Consistently, PPi-PFK can replace the enzymes of both the forward (ATP-PFK) and reverse (fructose-bisphosphatase (FBPase)) reactions. This chain is Pyrophosphate--fructose 6-phosphate 1-phosphotransferase, found in Amycolatopsis mediterranei (strain S699) (Nocardia mediterranei).